The sequence spans 470 residues: Argininosuccinate lyase (470 aa).

Belongs to the lyase 1 family. Argininosuccinate lyase subfamily.

It localises to the cytoplasm. The catalysed reaction is 2-(N(omega)-L-arginino)succinate = fumarate + L-arginine. The protein operates within amino-acid biosynthesis; L-arginine biosynthesis; L-arginine from L-ornithine and carbamoyl phosphate: step 3/3. This is Argininosuccinate lyase from Ehrlichia chaffeensis (strain ATCC CRL-10679 / Arkansas).